We begin with the raw amino-acid sequence, 217 residues long: MGQKVHPIGMRVGIIRDWDAKWYAEKEYADYLHEDLAIRKFVQKELADAAISTIEIERAVNKVNVSLHTAKPGMVIGKGGANVDALRAKLNKLTGKQVHINIIEIKRPDLDAHLVGEGIARQLEQRVAFRRAQKQAIQRTMRAGAKGIKTQVSGRLNGADIARSEGYSEGTVPLHTLRADIDYAWEEADTTYGKLGVKVWIYRGEVLPARKNTKGGK.

The KH type-2 domain occupies 38–106 (IRKFVQKELA…QVHINIIEIK (69 aa)).

This sequence belongs to the universal ribosomal protein uS3 family. In terms of assembly, part of the 30S ribosomal subunit. Forms a tight complex with proteins S10 and S14.

Its function is as follows. Binds the lower part of the 30S subunit head. Binds mRNA in the 70S ribosome, positioning it for translation. The sequence is that of Small ribosomal subunit protein uS3 from Streptococcus sanguinis (strain SK36).